The sequence spans 92 residues: Small ribosomal subunit protein uS19c (92 aa).

It belongs to the universal ribosomal protein uS19 family.

It is found in the plastid. It localises to the chloroplast. Protein S19 forms a complex with S13 that binds strongly to the 16S ribosomal RNA. In Psilotum nudum (Whisk fern), this protein is Small ribosomal subunit protein uS19c.